A 706-amino-acid chain; its full sequence is MVAATGHRICNDCSKACIYQKQDPVNIPLIESNILEETLKLPYGLEIYILLTRWNPLNIYAPLPKEPTNYNILVTGLGPAGFSLSYYLLRSGHNVTAIDGLKITPLSFNIHKPVKFWHEYKNLLSERIPKGFGGVAEYGITIRWDKNNLDILRLILERNNNFKYYDGVALGFNITKEQALDLSFDHVAFCIGAGKPKILNIENFEAKGVRTASDFLMTLQNGGAFLQNSNTNMMIRMPIVIIGGGLTSLDVATESLFYYKKQVEEFAKNYIEKDLTEEDKEIAEEFIAHAKLFKEAKNNEELKKVFNKLGGATVYYRGRLQDSPAYKLNHEELIYTLALGVNFKENMQPLRINIDKYGHVESVEFSITTWLDRRTHKKYHINMCPTVKPSSNTVLIKTKTVIMAIGIENNTQFDYDKYSYFGDCNPKYFGSVVKAITSAKEGYEVINKRLIDNVPSFKGSYACFITQLDYLLTSRINKINILNDKTFELIIHSPLAAKNFQFGQFFRLQNYSKDITKLIEPVALSPADIDIEKGLISFIVYEVGKSTSLCKTLSENEKVVLMGPTGSPLEIPQNKKIIIIDSKYRNVGLLKILKENKNKVIFATYPDIKKHKLTSVDIVIINTSPEIAEELQELKIFGENTELIINVNSLMQCMMKGICGQCIQKVKGKQKYIFACSEQNQNVEIIDFKSLKTRLRQNSLQEKMSN.

This is an uncharacterized protein from Rickettsia prowazekii (strain Madrid E).